Consider the following 292-residue polypeptide: Phosphatidylserine decarboxylase proenzyme (292 aa).

Active-site charge relay system; for autoendoproteolytic cleavage activity residues include aspartate 89, histidine 146, and serine 252. Serine 252 functions as the Schiff-base intermediate with substrate; via pyruvic acid; for decarboxylase activity in the catalytic mechanism. At serine 252 the chain carries Pyruvic acid (Ser); by autocatalysis.

The protein belongs to the phosphatidylserine decarboxylase family. PSD-B subfamily. Prokaryotic type I sub-subfamily. Heterodimer of a large membrane-associated beta subunit and a small pyruvoyl-containing alpha subunit. It depends on pyruvate as a cofactor. Is synthesized initially as an inactive proenzyme. Formation of the active enzyme involves a self-maturation process in which the active site pyruvoyl group is generated from an internal serine residue via an autocatalytic post-translational modification. Two non-identical subunits are generated from the proenzyme in this reaction, and the pyruvate is formed at the N-terminus of the alpha chain, which is derived from the carboxyl end of the proenzyme. The autoendoproteolytic cleavage occurs by a canonical serine protease mechanism, in which the side chain hydroxyl group of the serine supplies its oxygen atom to form the C-terminus of the beta chain, while the remainder of the serine residue undergoes an oxidative deamination to produce ammonia and the pyruvoyl prosthetic group on the alpha chain. During this reaction, the Ser that is part of the protease active site of the proenzyme becomes the pyruvoyl prosthetic group, which constitutes an essential element of the active site of the mature decarboxylase.

Its subcellular location is the cell membrane. It carries out the reaction a 1,2-diacyl-sn-glycero-3-phospho-L-serine + H(+) = a 1,2-diacyl-sn-glycero-3-phosphoethanolamine + CO2. It functions in the pathway phospholipid metabolism; phosphatidylethanolamine biosynthesis; phosphatidylethanolamine from CDP-diacylglycerol: step 2/2. Functionally, catalyzes the formation of phosphatidylethanolamine (PtdEtn) from phosphatidylserine (PtdSer). The chain is Phosphatidylserine decarboxylase proenzyme from Shewanella sp. (strain ANA-3).